A 757-amino-acid polypeptide reads, in one-letter code: Endonuclease MutS2 (757 aa).

321–328 (GPNMGGKT) serves as a coordination point for ATP. In terms of domain architecture, Smr spans 681–756 (IDIRGMTVEE…GTGVTVVEVK (76 aa)).

This sequence belongs to the DNA mismatch repair MutS family. MutS2 subfamily. As to quaternary structure, homodimer. Binds to stalled ribosomes, contacting rRNA. Interacts with MutL.

Nuclease activity is stimulated by interaction with MutL and inhibited in the presence of non-hydrolytic ATP (ADPnP). ATPase activity is stimulated by DNA. Its function is as follows. Endonuclease that is involved in the suppression of homologous recombination and thus may have a key role in the control of bacterial genetic diversity. Has ATPase activity. Binds to DNA. In terms of biological role, acts as a ribosome collision sensor, splitting the ribosome into its 2 subunits. Detects stalled/collided 70S ribosomes which it binds and splits by an ATP-hydrolysis driven conformational change. Acts upstream of the ribosome quality control system (RQC), a ribosome-associated complex that mediates the extraction of incompletely synthesized nascent chains from stalled ribosomes and their subsequent degradation. Probably generates substrates for RQC. This Thermotoga maritima (strain ATCC 43589 / DSM 3109 / JCM 10099 / NBRC 100826 / MSB8) protein is Endonuclease MutS2.